Consider the following 84-residue polypeptide: UPF0320 protein YNR077C (84 aa).

The protein belongs to the UPF0320 family.

The sequence is that of UPF0320 protein YNR077C from Saccharomyces cerevisiae (strain ATCC 204508 / S288c) (Baker's yeast).